We begin with the raw amino-acid sequence, 72 residues long: Translation initiation factor IF-1 (72 aa).

Positions 1-72 (MSKDDSIEFE…TKGRITYRMK (72 aa)) constitute an S1-like domain.

Belongs to the IF-1 family. Component of the 30S ribosomal translation pre-initiation complex which assembles on the 30S ribosome in the order IF-2 and IF-3, IF-1 and N-formylmethionyl-tRNA(fMet); mRNA recruitment can occur at any time during PIC assembly.

The protein localises to the cytoplasm. In terms of biological role, one of the essential components for the initiation of protein synthesis. Stabilizes the binding of IF-2 and IF-3 on the 30S subunit to which N-formylmethionyl-tRNA(fMet) subsequently binds. Helps modulate mRNA selection, yielding the 30S pre-initiation complex (PIC). Upon addition of the 50S ribosomal subunit IF-1, IF-2 and IF-3 are released leaving the mature 70S translation initiation complex. The polypeptide is Translation initiation factor IF-1 (Xanthomonas euvesicatoria pv. vesicatoria (strain 85-10) (Xanthomonas campestris pv. vesicatoria)).